Reading from the N-terminus, the 431-residue chain is tRNA-2-methylthio-N(6)-dimethylallyladenosine synthase (431 aa).

The 117-residue stretch at 4–120 folds into the MTTase N-terminal domain; sequence RAVYIKTFGC…IENIIENQVS (117 aa). [4Fe-4S] cluster contacts are provided by cysteine 13, cysteine 49, cysteine 83, cysteine 154, cysteine 158, and cysteine 161. Residues 140–367 enclose the Radical SAM core domain; the sequence is RKDCVKAWVN…LKLQDEITER (228 aa). In terms of domain architecture, TRAM spans 370–430; it reads KRLEGKIQEV…RHSLEGDIIS (61 aa).

The protein belongs to the methylthiotransferase family. MiaB subfamily. As to quaternary structure, monomer. Requires [4Fe-4S] cluster as cofactor.

It is found in the cytoplasm. The catalysed reaction is N(6)-dimethylallyladenosine(37) in tRNA + (sulfur carrier)-SH + AH2 + 2 S-adenosyl-L-methionine = 2-methylsulfanyl-N(6)-dimethylallyladenosine(37) in tRNA + (sulfur carrier)-H + 5'-deoxyadenosine + L-methionine + A + S-adenosyl-L-homocysteine + 2 H(+). In terms of biological role, catalyzes the methylthiolation of N6-(dimethylallyl)adenosine (i(6)A), leading to the formation of 2-methylthio-N6-(dimethylallyl)adenosine (ms(2)i(6)A) at position 37 in tRNAs that read codons beginning with uridine. The sequence is that of tRNA-2-methylthio-N(6)-dimethylallyladenosine synthase from Thermodesulfovibrio yellowstonii (strain ATCC 51303 / DSM 11347 / YP87).